We begin with the raw amino-acid sequence, 588 residues long: MKEKAAETMEIPEGIPKDLEPKHPTLWRIIYYSFGVVLLATITAAYVAEFQVLKHEAILFSLGLYGLAMLLHLMMQSLFAFLEIRRVNKSELPCSFKKTVALTIAGYQENPEYLIKCLESCKYVKYPKDKLKIILVIDGNTEDDAYMMEMFKDVFHGEDVGTYVWKGNYHTVKKPEETNKGSCPEVSKPLNEDEGINMVEELVRNKRCVCIMQQWGGKREVMYTAFQAIGTSVDYVQVCDSDTKLDELATVEMVKVLESNDMYGAVGGDVRILNPYDSFISFMSSLRYWMAFNVERACQSYFDCVSCISGPLGMYRNNILQVFLEAWYRQKFLGTYCTLGDDRHLTNRVLSMGYRTKYTHKSRAFSETPSLYLRWLNQQTRWTKSYFREWLYNAQWWHKHHIWMTYESVVSFIFPFFITATVIRLIYAGTIWNVVWLLLCIQIMSLFKSIYACWLRGNFIMLLMSLYSMLYMTGLLPSKYFALLTLNKTGWGTSGRKKIVGNYMPILPLSIWAAVLCGGVGYSIYMDCQNDWSTPEKQKEMYHLLYGCVGYVMYWVIMAVMYWVWVKRCCRKRSQTVTLVHDIPDMCV.

Topologically, residues 1–28 (MKEKAAETMEIPEGIPKDLEPKHPTLWR) are cytoplasmic. Residues 29–49 (IIYYSFGVVLLATITAAYVAE) traverse the membrane as a helical segment. At 50-61 (FQVLKHEAILFS) the chain is on the extracellular side. Residues 62 to 82 (LGLYGLAMLLHLMMQSLFAFL) form a helical membrane-spanning segment. The Cytoplasmic segment spans residues 83-411 (EIRRVNKSEL…IWMTYESVVS (329 aa)). The helical transmembrane segment at 412-432 (FIFPFFITATVIRLIYAGTIW) threads the bilayer. N433 is a topological domain (extracellular). A helical transmembrane segment spans residues 434-454 (VVWLLLCIQIMSLFKSIYACW). The Cytoplasmic segment spans residues 455–456 (LR). A helical transmembrane segment spans residues 457-477 (GNFIMLLMSLYSMLYMTGLLP). The Extracellular segment spans residues 478–505 (SKYFALLTLNKTGWGTSGRKKIVGNYMP). The chain crosses the membrane as a helical span at residues 506–526 (ILPLSIWAAVLCGGVGYSIYM). Residues 527–543 (DCQNDWSTPEKQKEMYH) lie on the Cytoplasmic side of the membrane. A helical transmembrane segment spans residues 544–564 (LLYGCVGYVMYWVIMAVMYWV). At 565-588 (WVKRCCRKRSQTVTLVHDIPDMCV) the chain is on the extracellular side.

This sequence belongs to the NodC/HAS family. Mg(2+) is required as a cofactor. In terms of tissue distribution, expression moves as a gradient through the embryo. The mRNA is first expressed in the animal region of the blastula, and by early gastrula is found everywhere except in the outer layer of the dorsal blastopore lip. By mid-gastrula, protein is present in the inner ectodermal layer and the endoderm, then disappears from dorsal ectoderm as the neural plate is induced and later decays in a dorsoventral direction. Last expressed in ventral regions of the gut at the tailbud stage (at protein level).

It is found in the membrane. The catalysed reaction is [hyaluronan](n) + UDP-N-acetyl-alpha-D-glucosamine = N-acetyl-beta-D-glucosaminyl-(1-&gt;4)-[hyaluronan](n) + UDP + H(+). The enzyme catalyses N-acetyl-beta-D-glucosaminyl-(1-&gt;4)-[hyaluronan](n) + UDP-alpha-D-glucuronate = [hyaluronan](n+1) + UDP + H(+). It functions in the pathway glycan biosynthesis; hyaluronan biosynthesis. Functionally, catalyzes the addition of GlcNAc or GlcUA monosaccharides to the nascent hyaluronan polymer. Therefore, it is essential to hyaluronan synthesis a major component of most extracellular matrices that has a structural role in tissues architectures and regulates cell adhesion, migration and differentiation. Also able to catalyze the synthesis of chito-oligosaccharide depending on the substrate. This Xenopus laevis (African clawed frog) protein is Hyaluronan synthase 1 (has1).